The following is a 155-amino-acid chain: Small ribosomal subunit protein uS7 (155 aa).

This sequence belongs to the universal ribosomal protein uS7 family. As to quaternary structure, part of the 30S ribosomal subunit. Contacts proteins S9 and S11.

Functionally, one of the primary rRNA binding proteins, it binds directly to 16S rRNA where it nucleates assembly of the head domain of the 30S subunit. Is located at the subunit interface close to the decoding center, probably blocks exit of the E-site tRNA. In Xanthomonas oryzae pv. oryzae (strain MAFF 311018), this protein is Small ribosomal subunit protein uS7.